Here is a 108-residue protein sequence, read N- to C-terminus: Trissin (108 aa).

Residues 1–29 (MTKTTMHWLAHFQIILLCIWLMCPPSSQA) form the signal peptide. Intrachain disulfides connect C32/C43, C35/C52, and C39/C51. Residues 57–108 (RKRSDPDALRQSSNRRLIDFILLQGRALFTQELRERRHNGTLMDLGLNTYYP) constitute a propeptide that is removed on maturation.

Its subcellular location is the secreted. Functionally, activates the G-protein coupled receptor TrissinR in vitro, leading to increased intracellular calcium ion levels. The protein is Trissin of Drosophila melanogaster (Fruit fly).